The sequence spans 319 residues: Acetyl esterase (319 aa).

The short motif at histidine 91–glycine 93 is the Involved in the stabilization of the negatively charged intermediate by the formation of the oxyanion hole element. Residues serine 165, aspartate 262, and histidine 292 contribute to the active site.

This sequence belongs to the 'GDXG' lipolytic enzyme family. Homodimer. Interacts with MalT and MelA.

The protein resides in the cytoplasm. Functionally, displays esterase activity towards short chain fatty esters (acyl chain length of up to 8 carbons). Able to hydrolyze triacetylglycerol (triacetin) and tributyrylglycerol (tributyrin), but not trioleylglycerol (triolein) or cholesterol oleate. Negatively regulates MalT activity by antagonizing maltotriose binding. Inhibits MelA galactosidase activity. The chain is Acetyl esterase from Escherichia coli O17:K52:H18 (strain UMN026 / ExPEC).